Reading from the N-terminus, the 228-residue chain is tRNA (guanine-N(1)-)-methyltransferase (228 aa).

S-adenosyl-L-methionine contacts are provided by residues glycine 111 and 131-136 (IGDFIL).

The protein belongs to the RNA methyltransferase TrmD family. In terms of assembly, homodimer.

It is found in the cytoplasm. The catalysed reaction is guanosine(37) in tRNA + S-adenosyl-L-methionine = N(1)-methylguanosine(37) in tRNA + S-adenosyl-L-homocysteine + H(+). Specifically methylates guanosine-37 in various tRNAs. The sequence is that of tRNA (guanine-N(1)-)-methyltransferase from Pelagibacter ubique (strain HTCC1062).